Here is a 430-residue protein sequence, read N- to C-terminus: Tektin-2 (430 aa).

Coiled coils occupy residues 75-162 (KETL…FQHL) and 226-380 (KNRA…IACK).

Belongs to the tektin family. Microtubule inner protein component of sperm flagellar doublet microtubules. May interact with CCDC172. Ubiquitinated, leading to its degradation. Deubiquitinated by USP16, promoting its stability. In terms of processing, tyrosine phosphorylated. Expressed in the testes (at protein level).

The protein localises to the cytoplasm. Its subcellular location is the cytoskeleton. It is found in the cilium axoneme. It localises to the flagellum axoneme. The protein resides in the microtubule organizing center. Its function is as follows. Microtubule inner protein (MIP) part of the dynein-decorated doublet microtubules (DMTs) in cilia and flagellar axoneme. Plays a key role in the assembly or attachment of the inner dynein arm to microtubules in sperm flagella and tracheal cilia. Forms filamentous polymers in the walls of ciliary and flagellar microtubules. The protein is Tektin-2 (Tekt2) of Mus musculus (Mouse).